A 199-amino-acid polypeptide reads, in one-letter code: Superoxide dismutase [Mn] 2 (199 aa).

Mn(2+) is bound by residues histidine 28, histidine 75, aspartate 157, and histidine 161.

Belongs to the iron/manganese superoxide dismutase family. Requires Mn(2+) as cofactor.

The enzyme catalyses 2 superoxide + 2 H(+) = H2O2 + O2. In terms of biological role, destroys superoxide anion radicals which are normally produced within the cells and which are toxic to biological systems. The protein is Superoxide dismutase [Mn] 2 (sod2) of Haloferax volcanii (strain ATCC 29605 / DSM 3757 / JCM 8879 / NBRC 14742 / NCIMB 2012 / VKM B-1768 / DS2) (Halobacterium volcanii).